Consider the following 581-residue polypeptide: Trehalase (581 aa).

This sequence belongs to the glycosyl hydrolase 15 family. Monomer.

The catalysed reaction is alpha,alpha-trehalose + H2O = alpha-D-glucose + beta-D-glucose. It participates in glycan degradation; trehalose degradation; D-glucose from alpha,alpha-trehalose: step 1/1. Inhibited by validamycin A. In terms of biological role, catalyzes the hydrolysis of alpha,alpha-trehalose into two molecules of D-glucose. The sequence is that of Trehalase from Thermoplasma acidophilum (strain ATCC 25905 / DSM 1728 / JCM 9062 / NBRC 15155 / AMRC-C165).